An 89-amino-acid chain; its full sequence is Small ribosomal subunit protein uS15 (89 aa).

Residues 1-11 (MSITAERKAEV) show a composition bias toward basic and acidic residues. Residues 1 to 24 (MSITAERKAEVIKTNAKKAGDTGS) are disordered.

It belongs to the universal ribosomal protein uS15 family. Part of the 30S ribosomal subunit. Forms a bridge to the 50S subunit in the 70S ribosome, contacting the 23S rRNA.

In terms of biological role, one of the primary rRNA binding proteins, it binds directly to 16S rRNA where it helps nucleate assembly of the platform of the 30S subunit by binding and bridging several RNA helices of the 16S rRNA. Forms an intersubunit bridge (bridge B4) with the 23S rRNA of the 50S subunit in the ribosome. In Afipia carboxidovorans (strain ATCC 49405 / DSM 1227 / KCTC 32145 / OM5) (Oligotropha carboxidovorans), this protein is Small ribosomal subunit protein uS15.